The following is a 752-amino-acid chain: Myotubularin-related protein 10 (752 aa).

The Myotubularin phosphatase domain occupies 206-636; that stretch reads FDCSSDWDRE…SHLSVWKLYF (431 aa). Residues 652-683 adopt a coiled-coil conformation; the sequence is TAFHKLSVLTDEIEMLQNQLRQYKGAAGTANT.

The protein belongs to the protein-tyrosine phosphatase family. Non-receptor class myotubularin subfamily.

The chain is Myotubularin-related protein 10 (mtmr10) from Danio rerio (Zebrafish).